A 430-amino-acid chain; its full sequence is Mannan endo-1,4-beta-mannosidase (430 aa).

Glutamate 173 acts as the Proton donor in catalysis. Glutamate 269 (nucleophile) is an active-site residue. CBM10 domains are found at residues 357-390 and 395-424; these read SCGTAPNGYPYCCNASSATGNGWGWENNRSCVVA and SCNWYGTSYPICVNTSSGWGWENNRSCIAA.

The protein belongs to the glycosyl hydrolase 5 (cellulase A) family.

It catalyses the reaction Random hydrolysis of (1-&gt;4)-beta-D-mannosidic linkages in mannans, galactomannans and glucomannans.. In terms of biological role, catalyzes the endo hydrolysis of beta-1,4-linked mannan, galactomannan and glucomannan. It is able to hydrolyze mannosidic linkages that are flanked by mannose or glucose. In Cellvibrio japonicus (strain Ueda107) (Pseudomonas fluorescens subsp. cellulosa), this protein is Mannan endo-1,4-beta-mannosidase.